The primary structure comprises 92 residues: Small ribosomal subunit protein uS19 (92 aa).

It belongs to the universal ribosomal protein uS19 family.

Its function is as follows. Protein S19 forms a complex with S13 that binds strongly to the 16S ribosomal RNA. This Nitrobacter winogradskyi (strain ATCC 25391 / DSM 10237 / CIP 104748 / NCIMB 11846 / Nb-255) protein is Small ribosomal subunit protein uS19.